Consider the following 563-residue polypeptide: Dicarboxylate transporter 2.1, chloroplastic (563 aa).

A chloroplast-targeting transit peptide spans 1 to 68; the sequence is MESFALHSLS…LKPIPRFSTR (68 aa). 2 disordered regions span residues 16–45 and 71–92; these read TLLS…STIS and AAPQ…PSPQ. Low complexity predominate over residues 28–45; that stretch reads RLSLLRRTSSRSPPSTIS. The segment covering 76 to 90 has biased composition (pro residues); the sequence is NAPPPPPPSPSPSPS. Helical transmembrane passes span 96-116, 134-154, 165-185, 234-254, 261-281, 308-328, 358-378, 379-399, 414-434, 450-470, 483-503, and 537-557; these read LIPL…VPVP, IAGL…GLTA, AAFS…FFFA, AGGI…SKPN, LGSY…ALFL, WFKA…LILY, NEWI…CGET, LGIP…VLGV, TLAW…LGVV, LSWP…HYLF, AFLA…LALA, and IGFV…TFWW.

It belongs to the SLC13A/DASS transporter (TC 2.A.47) family. DIT1 subfamily. In terms of tissue distribution, expressed in roots, rosette and cauline leaves, stems, flowers and siliques.

The protein localises to the plastid. The protein resides in the chloroplast inner membrane. Its function is as follows. Glutamate/malate translocator involved with DIT1 in primary ammonia assimilation and in the re-assimilation of ammonia generated by the photorespiratory pathway. Exports the end product of ammonia assimilation, glutamate, from plastids to the cytosol. The precursor for ammonia assimilation, 2-oxoglutarate, is imported from the cytosol by DIT1. The chain is Dicarboxylate transporter 2.1, chloroplastic (DIT2-1) from Arabidopsis thaliana (Mouse-ear cress).